Consider the following 436-residue polypeptide: MKVLVVGTGAREHAIADALKDDVELYCYMSKVNPGISKIAEFAQGDEGEIEKVAKFAVDNNIDIAFIGPEAPLGKGIVDELEKNGISCVGPSQSAARIETDKSFMRKLFEDYDIEGSLVYKVFDNYDDVSAFLDDFDRDVVVKPVGLTGGKGVKIVGDHLKDNQEAKEYSKEVIDNAMGGFTQVIIEERLIGEEFTIQAFCDGTHLAPMPAAQDHPHAFEGDVGAITGGMGSYSDKGGLLPFLSQDDYDEAVKIMEATLKAIAKEAEPYKGILYGQFMLTADGPKLIEYNARFGDPEAMNVLPLLKTPLADVCQAIVDGNLDKVEFNDKASVCKYIVPDGYPETSHAGETIEVDEKTIEDLGAKVFYAAVGLEDDEIHLSGSRALGIVASGDSIEEAEKIAEKACACIKGNVYHRSDVGTTDLVNKRVEHMKEILN.

Residues 106–318 form the ATP-grasp domain; sequence RKLFEDYDIE…LADVCQAIVD (213 aa). 133–196 serves as a coordination point for ATP; sequence LDDFDRDVVV…EERLIGEEFT (64 aa). Mg(2+)-binding residues include glutamine 276, glutamate 288, and asparagine 290. Positions 276, 288, and 290 each coordinate Mn(2+).

This sequence belongs to the GARS family. Requires Mg(2+) as cofactor. It depends on Mn(2+) as a cofactor.

It carries out the reaction 5-phospho-beta-D-ribosylamine + glycine + ATP = N(1)-(5-phospho-beta-D-ribosyl)glycinamide + ADP + phosphate + H(+). It functions in the pathway purine metabolism; IMP biosynthesis via de novo pathway; N(1)-(5-phospho-D-ribosyl)glycinamide from 5-phospho-alpha-D-ribose 1-diphosphate: step 2/2. The sequence is that of Phosphoribosylamine--glycine ligase from Methanobrevibacter smithii (strain ATCC 35061 / DSM 861 / OCM 144 / PS).